The chain runs to 399 residues: Protein TWIN LOV 1 (399 aa).

Residues 26 to 97 (LWIKEALEEL…MEIREAIREE (72 aa)) form the PAS 1 domain. In terms of domain architecture, PAC 1 spans 98 to 153 (RSVQVSLLNYRKSGSPFWMLFHMCPVFGKDDGKVTNFVAVQVPISGREHHRKKLRN). Residues 249–320 (SLVISLGRIK…EMKECILKGQ (72 aa)) enclose the PAS 2 domain. Cys296 is modified (S-4a-FMN cysteine). Residues 320–376 (QSCTVQILNYSNRKDKSSFWNLLHISPVRNASGKTAYFVGVQVEASCRNTEIKELRP) enclose the PAC 2 domain.

As to quaternary structure, interacts with VTC2, VTC5 and BLH10. In terms of processing, FMN binds covalently to cysteine after exposure to blue light and is reversed in the dark.

The polypeptide is Protein TWIN LOV 1 (TLP1) (Arabidopsis thaliana (Mouse-ear cress)).